A 496-amino-acid chain; its full sequence is Glutamyl-tRNA(Gln) amidotransferase subunit A (496 aa).

Residues Lys-75 and Ser-150 each act as charge relay system in the active site. Catalysis depends on Ser-174, which acts as the Acyl-ester intermediate.

This sequence belongs to the amidase family. GatA subfamily. In terms of assembly, heterotrimer of A, B and C subunits.

The enzyme catalyses L-glutamyl-tRNA(Gln) + L-glutamine + ATP + H2O = L-glutaminyl-tRNA(Gln) + L-glutamate + ADP + phosphate + H(+). In terms of biological role, allows the formation of correctly charged Gln-tRNA(Gln) through the transamidation of misacylated Glu-tRNA(Gln) in organisms which lack glutaminyl-tRNA synthetase. The reaction takes place in the presence of glutamine and ATP through an activated gamma-phospho-Glu-tRNA(Gln). In Burkholderia pseudomallei (strain 668), this protein is Glutamyl-tRNA(Gln) amidotransferase subunit A.